The chain runs to 594 residues: DNA ligase (594 aa).

Glutamate 256 is an ATP binding site. The active-site N6-AMP-lysine intermediate is the lysine 258. Positions 263, 279, 309, 349, 426, and 432 each coordinate ATP.

Belongs to the ATP-dependent DNA ligase family. Mg(2+) is required as a cofactor.

The enzyme catalyses ATP + (deoxyribonucleotide)n-3'-hydroxyl + 5'-phospho-(deoxyribonucleotide)m = (deoxyribonucleotide)n+m + AMP + diphosphate.. In terms of biological role, DNA ligase that seals nicks in double-stranded DNA during DNA replication, DNA recombination and DNA repair. This chain is DNA ligase, found in Ignicoccus hospitalis (strain KIN4/I / DSM 18386 / JCM 14125).